We begin with the raw amino-acid sequence, 502 residues long: 4,4'-diapophytoene desaturase (4,4'-diaponeurosporene-forming) (502 aa).

Residue 5–17 (VIGAGVTGLAAAA) coordinates FAD.

It belongs to the carotenoid/retinoid oxidoreductase family. CrtN subfamily.

It catalyses the reaction 15-cis-4,4'-diapophytoene + 3 FAD + 3 H(+) = all-trans-4,4'-diaponeurosporene + 3 FADH2. Its pathway is carotenoid biosynthesis; staphyloxanthin biosynthesis; staphyloxanthin from farnesyl diphosphate: step 2/5. Its function is as follows. Involved in the biosynthesis of the yellow-orange carotenoid staphyloxanthin, which plays a role in the virulence via its protective function against oxidative stress. Catalyzes three successive dehydrogenation reactions that lead to the introduction of three double bonds into 4,4'-diapophytoene (dehydrosqualene), with 4,4'-diapophytofluene and 4,4'-diapo-zeta-carotene as intermediates, and 4,4'-diaponeurosporene (the major deep-yellow pigment in staphylococci strains) as the end product. The protein is 4,4'-diapophytoene desaturase (4,4'-diaponeurosporene-forming) of Staphylococcus aureus (strain MRSA252).